Here is a 418-residue protein sequence, read N- to C-terminus: Transcription termination factor Rho (418 aa).

The Rho RNA-BD domain maps to 48-123 (DIYGDGVLEI…LKVNDINFDR (76 aa)). ATP is bound by residues 169 to 174 (GKGQRG), 181 to 186 (KAGKTM), and R212.

This sequence belongs to the Rho family. Homohexamer. The homohexamer assembles into an open ring structure.

Facilitates transcription termination by a mechanism that involves Rho binding to the nascent RNA, activation of Rho's RNA-dependent ATPase activity, and release of the mRNA from the DNA template. The protein is Transcription termination factor Rho of Allochromatium vinosum (strain ATCC 17899 / DSM 180 / NBRC 103801 / NCIMB 10441 / D) (Chromatium vinosum).